The sequence spans 371 residues: tRNA-specific 2-thiouridylase MnmA (371 aa).

Residues 13–20 and Met-39 contribute to the ATP site; that span reads GMSGGVDS. The tract at residues 99–101 is interaction with target base in tRNA; that stretch reads NPD. Cys-104 serves as the catalytic Nucleophile. Cys-104 and Cys-200 are joined by a disulfide. Position 128 (Gly-128) interacts with ATP. Residues 150–152 form an interaction with tRNA region; the sequence is KDQ. Catalysis depends on Cys-200, which acts as the Cysteine persulfide intermediate. An interaction with tRNA region spans residues 309–310; sequence RY.

This sequence belongs to the MnmA/TRMU family.

The protein resides in the cytoplasm. The catalysed reaction is S-sulfanyl-L-cysteinyl-[protein] + uridine(34) in tRNA + AH2 + ATP = 2-thiouridine(34) in tRNA + L-cysteinyl-[protein] + A + AMP + diphosphate + H(+). Catalyzes the 2-thiolation of uridine at the wobble position (U34) of tRNA, leading to the formation of s(2)U34. This Bacillus velezensis (strain DSM 23117 / BGSC 10A6 / LMG 26770 / FZB42) (Bacillus amyloliquefaciens subsp. plantarum) protein is tRNA-specific 2-thiouridylase MnmA.